The following is a 508-amino-acid chain: Photosystem II CP47 reaction center protein (508 aa).

Transmembrane regions (helical) follow at residues 21-36 (AVHI…WAGS), 101-115 (IVFS…IWHW), 140-156 (GIHL…FGAF), 203-218 (IAAG…FHLS), 237-252 (VLSS…AFVV), and 457-472 (SFAL…HGAR).

Belongs to the PsbB/PsbC family. PsbB subfamily. In terms of assembly, PSII is composed of 1 copy each of membrane proteins PsbA, PsbB, PsbC, PsbD, PsbE, PsbF, PsbH, PsbI, PsbJ, PsbK, PsbL, PsbM, PsbT, PsbX, PsbY, PsbZ, Psb30/Ycf12, at least 3 peripheral proteins of the oxygen-evolving complex and a large number of cofactors. It forms dimeric complexes. Interacts with PAM68. Interacts with HHL1. Requires Binds multiple chlorophylls. PSII binds additional chlorophylls, carotenoids and specific lipids. as cofactor.

The protein localises to the plastid. It localises to the chloroplast thylakoid membrane. Its function is as follows. One of the components of the core complex of photosystem II (PSII). It binds chlorophyll and helps catalyze the primary light-induced photochemical processes of PSII. PSII is a light-driven water:plastoquinone oxidoreductase, using light energy to abstract electrons from H(2)O, generating O(2) and a proton gradient subsequently used for ATP formation. The polypeptide is Photosystem II CP47 reaction center protein (Arabidopsis thaliana (Mouse-ear cress)).